The primary structure comprises 1194 residues: IQ motif and SEC7 domain-containing protein 3 (1194 aa).

A coiled-coil region spans residues 20-56; that stretch reads AIVQNQQSLIHTQRQRIDELERRLDELSAENRSLWEH. Disordered regions lie at residues 62–149 and 229–272; these read AQPP…EKER and GRPS…QQPA. The span at 63 to 78 shows a compositional bias: pro residues; it reads QPPPGLVPPPSAPLPA. Over residues 79-92 the composition is skewed to low complexity; that stretch reads PAATAPAATAAQEP. Positions 122–133 are enriched in polar residues; it reads PSSRVQTPQSPH. S255 is subject to Phosphoserine. In terms of domain architecture, IQ spans 311–340; it reads SRRAACTIQTAFRQYQLSKNFEKIRNSLLE. 2 disordered regions span residues 439–471 and 515–610; these read SAGQPGLETEAAREPDSGPGSGDEAGSLPQGHS and PAAV…KSAK. Composition is skewed to low complexity over residues 561–572 and 600–610; these read VAEAVVEEAVAT and SSSSASTKSAK. Residues 646–839 enclose the SEC7 domain; sequence TLSTDTLRKR…VGIYERIQQK (194 aa). The region spanning 852 to 985 is the PH domain; it reads TKVEKSIVGM…LKESIAEVTE (134 aa). Disordered stretches follow at residues 1002 to 1099 and 1137 to 1175; these read KTLS…PTPP and SSDSCGSTPLRGPGSPVKVIHQPPLPPPPPPYNHPHQFC. Residues 1024–1035 are compositionally biased toward basic and acidic residues; that stretch reads AKREAMAGEKAT. The segment covering 1036–1052 has biased composition (polar residues); that stretch reads ESSGEVSIHNRLQTFQH. Pro residues-rich tracts occupy residues 1064 to 1099 and 1159 to 1169; these read APSPPTSPPPPLPPDPQPSPLREQPPPLPLPPPTPP and PPLPPPPPPYN.

It belongs to the BRAG family. Interacts with DLG1 and DLG4. Interacts with GPHN. In terms of tissue distribution, expressed in brain. Localized to dendrites, as well as somas of neuronal cells.

The protein localises to the cytoplasm. The protein resides in the postsynaptic density. Acts as a guanine nucleotide exchange factor (GEF) for ARF1. This chain is IQ motif and SEC7 domain-containing protein 3 (Iqsec3), found in Rattus norvegicus (Rat).